A 146-amino-acid chain; its full sequence is Tol-Pal system protein TolR (146 aa).

The chain crosses the membrane as a helical span at residues 16 to 36 (VVPYIDVMLVLLVIFMVTAPM).

It belongs to the ExbD/TolR family. As to quaternary structure, the Tol-Pal system is composed of five core proteins: the inner membrane proteins TolA, TolQ and TolR, the periplasmic protein TolB and the outer membrane protein Pal. They form a network linking the inner and outer membranes and the peptidoglycan layer.

It is found in the cell inner membrane. Its function is as follows. Part of the Tol-Pal system, which plays a role in outer membrane invagination during cell division and is important for maintaining outer membrane integrity. The protein is Tol-Pal system protein TolR of Pseudomonas aeruginosa (strain ATCC 15692 / DSM 22644 / CIP 104116 / JCM 14847 / LMG 12228 / 1C / PRS 101 / PAO1).